Reading from the N-terminus, the 461-residue chain is MNRTTSRQTTSSSSYKRMFGGEGRPSVGMARSTLSSRQYSSPVRSSRMSYSVSAPPSIYASKNVRLRSSAPMPRLSSDTVDFALSDAINSEFKANRTNEKAEMQHLNDRFASYIDKVRFLEQQNKILLAELEQLKGKGASRIGDLYEDEMRDLRRQVDQLTNEKAHVEVDRDNMGEDIERLREKLQDEMIQKEEAEHNLQSFRQDVDNASLARLDLERKVESLQEEIIFLRKLHDEEVAELQAQIQDQHVQIDMDVAKPDLTAALRDVRVQYETLASRNLQDSEDWYKSKFADLSEAANRNTDAIRQAKQEANEYRRQVQALTCEVDSLKGTNESMERQMRELEESFGCEANNFQDTISRLEDDIRNMKDEMARHLREYQDLLNVKMALDIEIATYRKLLEGEESRITTPMPNFSSFNLRESMLEARPMIDNLSKKVVIKTIETRDGHVINESTQNHDDLE.

Composition is skewed to low complexity over residues 1–14 (MNRT…SSSS) and 35–52 (SSRQ…SYSV). The tract at residues 1–52 (MNRTTSRQTTSSSSYKRMFGGEGRPSVGMARSTLSSRQYSSPVRSSRMSYSV) is disordered. Residues 1-91 (MNRTTSRQTT…FALSDAINSE (91 aa)) are head. The segment at 92–127 (FKANRTNEKAEMQHLNDRFASYIDKVRFLEQQNKIL) is coil 1A. The stretch at 92–127 (FKANRTNEKAEMQHLNDRFASYIDKVRFLEQQNKIL) forms a coiled coil. In terms of domain architecture, IF rod spans 99–407 (EKAEMQHLND…KLLEGEESRI (309 aa)). The interval 128-149 (LAELEQLKGKGASRIGDLYEDE) is linker 1. Residues 150–241 (MRDLRRQVDQ…KLHDEEVAEL (92 aa)) are a coiled coil. The tract at residues 150-241 (MRDLRRQVDQ…KLHDEEVAEL (92 aa)) is coil 1B. A linker 12 region spans residues 242–264 (QAQIQDQHVQIDMDVAKPDLTAA). Residues 265–403 (LRDVRVQYET…ATYRKLLEGE (139 aa)) form a coil 2 region. Residues 299 to 403 (NRNTDAIRQA…ATYRKLLEGE (105 aa)) are a coiled coil. The segment at 404–461 (ESRITTPMPNFSSFNLRESMLEARPMIDNLSKKVVIKTIETRDGHVINESTQNHDDLE) is tail.

The protein belongs to the intermediate filament family. Homomer assembled from elementary dimers. Post-translationally, one of the most prominent phosphoproteins in various cells of mesenchymal origin. Phosphorylation is enhanced during cell division, at which time vimentin filaments are significantly reorganized.

The protein resides in the cytoplasm. Its subcellular location is the cytoskeleton. The protein localises to the nucleus matrix. Vimentins are class-III intermediate filaments found in various non-epithelial cells, especially mesenchymal cells. Vimentin is attached to the nucleus, endoplasmic reticulum, and mitochondria, either laterally or terminally. This chain is Vimentin (vim), found in Oncorhynchus mykiss (Rainbow trout).